The chain runs to 64 residues: Prokaryotic ubiquitin-like protein Pup (64 aa).

A compositionally biased stretch (polar residues) spans 1 to 10; the sequence is MNQNGSQIHS. Residues 1-32 are disordered; sequence MNQNGSQIHSDGNGHSDDTDTPGVSAGQVSVN. The ARC ATPase binding stretch occupies residues 20-58; it reads DTPGVSAGQVSVNTAGVDDLLDEIDGLLESNAEEFVRSY. Position 64 is a deamidated glutamine (Gln64). Gln64 is covalently cross-linked (Isoglutamyl lysine isopeptide (Gln-Lys) (interchain with K-? in acceptor proteins)).

Belongs to the prokaryotic ubiquitin-like protein family. Strongly interacts with the proteasome-associated ATPase ARC through a hydrophobic interface; the interacting region of Pup lies in its C-terminal half. There is one Pup binding site per ARC hexamer ring. Post-translationally, is modified by deamidation of its C-terminal glutamine to glutamate by the deamidase Dop, a prerequisite to the subsequent pupylation process.

It functions in the pathway protein degradation; proteasomal Pup-dependent pathway. Protein modifier that is covalently attached to lysine residues of substrate proteins, thereby targeting them for proteasomal degradation. The tagging system is termed pupylation. This chain is Prokaryotic ubiquitin-like protein Pup, found in Corynebacterium diphtheriae (strain ATCC 700971 / NCTC 13129 / Biotype gravis).